We begin with the raw amino-acid sequence, 622 residues long: Chaperone protein HscA homolog (622 aa).

It belongs to the heat shock protein 70 family.

Functionally, chaperone involved in the maturation of iron-sulfur cluster-containing proteins. Has a low intrinsic ATPase activity which is markedly stimulated by HscB. The protein is Chaperone protein HscA homolog of Burkholderia orbicola (strain MC0-3).